The sequence spans 597 residues: CTP synthase (597 aa).

Residues 1–272 (MARPKNVKYV…DMRVLKKLGL (272 aa)) are amidoligase domain. Serine 18 contacts CTP. UTP is bound at residue serine 18. 19–24 (SLGKGI) is a binding site for ATP. Tyrosine 59 provides a ligand contact to L-glutamine. Aspartate 76 contributes to the ATP binding site. Residues aspartate 76 and glutamate 146 each coordinate Mg(2+). Residues 153–155 (DIE), 193–198 (KTKPTQ), and lysine 229 contribute to the CTP site. Residues 193 to 198 (KTKPTQ) and lysine 229 each bind UTP. In terms of domain architecture, Glutamine amidotransferase type-1 spans 299-543 (NVAICGKYTE…VGAAKAYADG (245 aa)). Glycine 363 is an L-glutamine binding site. Cysteine 390 functions as the Nucleophile; for glutamine hydrolysis in the catalytic mechanism. L-glutamine-binding positions include 391–394 (LGMQ), glutamate 414, and arginine 471. Active-site residues include histidine 516 and glutamate 518.

This sequence belongs to the CTP synthase family. Homotetramer.

It carries out the reaction UTP + L-glutamine + ATP + H2O = CTP + L-glutamate + ADP + phosphate + 2 H(+). The catalysed reaction is L-glutamine + H2O = L-glutamate + NH4(+). It catalyses the reaction UTP + NH4(+) + ATP = CTP + ADP + phosphate + 2 H(+). Its pathway is pyrimidine metabolism; CTP biosynthesis via de novo pathway; CTP from UDP: step 2/2. Allosterically activated by GTP, when glutamine is the substrate; GTP has no effect on the reaction when ammonia is the substrate. The allosteric effector GTP functions by stabilizing the protein conformation that binds the tetrahedral intermediate(s) formed during glutamine hydrolysis. Inhibited by the product CTP, via allosteric rather than competitive inhibition. Functionally, catalyzes the ATP-dependent amination of UTP to CTP with either L-glutamine or ammonia as the source of nitrogen. Regulates intracellular CTP levels through interactions with the four ribonucleotide triphosphates. The chain is CTP synthase from Chlorobium luteolum (strain DSM 273 / BCRC 81028 / 2530) (Pelodictyon luteolum).